Here is a 215-residue protein sequence, read N- to C-terminus: Pyrrolidone-carboxylate peptidase (215 aa).

Catalysis depends on residues Glu-78, Cys-141, and His-165.

It belongs to the peptidase C15 family. As to quaternary structure, homotetramer.

The protein localises to the cytoplasm. It catalyses the reaction Release of an N-terminal pyroglutamyl group from a polypeptide, the second amino acid generally not being Pro.. In terms of biological role, removes 5-oxoproline from various penultimate amino acid residues except L-proline. This is Pyrrolidone-carboxylate peptidase from Lacticaseibacillus paracasei (strain ATCC 334 / BCRC 17002 / CCUG 31169 / CIP 107868 / KCTC 3260 / NRRL B-441) (Lactobacillus paracasei).